The chain runs to 86 residues: Serine protease inhibitor Kazal-type 9 (86 aa).

Residues 1–19 (MRATAIVLLLALTLATMFS) form the signal peptide. Positions 26 to 86 (TKQMVDCSHY…TLKFVHFGKC (61 aa)) constitute a Kazal-like domain. 3 disulfides stabilise this stretch: cysteine 32–cysteine 68, cysteine 46–cysteine 65, and cysteine 54–cysteine 86.

Dimer. Interacts with KLK5 and KLK8. As to expression, skin. Highly expressed at sites of hyperkeratosis. Also detected in thymus, tonsils, testis, pancreas, liver, placenta and brain. Expressed at stratum granulosum and stratum corneum at palmar and plantar sites (at protein level).

Its subcellular location is the secreted. Serine protease inhibitor which specifically inhibits KLK5. May contribute to the regulation of the desquamation process in skin by inhibiting KLK5. This is Serine protease inhibitor Kazal-type 9 (SPINK9) from Homo sapiens (Human).